The sequence spans 467 residues: Probable receptor-like protein kinase At3g17420 (467 aa).

Residues 1–35 (MTSQLKRTLTKRYGVLELWEIIVIALFAAFIVILV) form the signal peptide. The Extracellular portion of the chain corresponds to 36-123 (LSVWLSFRKK…LPPSTPSTTA (88 aa)). N50 carries N-linked (GlcNAc...) asparagine glycosylation. S70 carries the post-translational modification Phosphoserine. N79 carries N-linked (GlcNAc...) asparagine glycosylation. A disordered region spans residues 102 to 126 (GSLEKKPLVGSHLPPSTPSTTAPSP). A helical membrane pass occupies residues 124 to 144 (PSPLLGLPEVSHIGWGHWFTL). At 145–467 (RDLQLATNHF…DNDITTDAKI (323 aa)) the chain is on the cytoplasmic side. Residues 154–433 (FSKESIIGDG…MLESDEYPVM (280 aa)) form the Protein kinase domain. Residues 160-168 (IGDGGYGVV) and K182 each bind ATP. Y227 is modified (phosphotyrosine). The active-site Proton acceptor is D280. Phosphoserine occurs at positions 284 and 313. Residues T314 and T319 each carry the phosphothreonine modification. The residue at position 327 (Y327) is a Phosphotyrosine. The interval 413–467 (DKRPKMSQVARMLESDEYPVMPREERRRRRNQNAETHRESTDTNKDNDITTDAKI) is disordered. Residues 447 to 467 (ETHRESTDTNKDNDITTDAKI) are compositionally biased toward basic and acidic residues.

It belongs to the protein kinase superfamily. Ser/Thr protein kinase family.

It localises to the cell membrane. The enzyme catalyses L-seryl-[protein] + ATP = O-phospho-L-seryl-[protein] + ADP + H(+). The catalysed reaction is L-threonyl-[protein] + ATP = O-phospho-L-threonyl-[protein] + ADP + H(+). In Arabidopsis thaliana (Mouse-ear cress), this protein is Probable receptor-like protein kinase At3g17420.